Here is a 143-residue protein sequence, read N- to C-terminus: Crossover junction endodeoxyribonuclease Hjc (143 aa).

E11 is a binding site for Mg(2+). S31 is a catalytic residue. Residues D41 and E54 each contribute to the Mg(2+) site.

This sequence belongs to the Holliday junction resolvase Hjc family. Homodimer. It depends on Mg(2+) as a cofactor.

It carries out the reaction Endonucleolytic cleavage at a junction such as a reciprocal single-stranded crossover between two homologous DNA duplexes (Holliday junction).. Functionally, a structure-specific endonuclease that resolves Holliday junction (HJ) intermediates during genetic recombination. Cleaves 4-way DNA junctions introducing paired nicks in opposing strands, leaving a 5'-terminal phosphate and a 3'-terminal hydroxyl group that are ligated to produce recombinant products. Redundant function with Holliday junction resolvase Hje. The protein is Crossover junction endodeoxyribonuclease Hjc of Sulfolobus acidocaldarius (strain ATCC 33909 / DSM 639 / JCM 8929 / NBRC 15157 / NCIMB 11770).